The primary structure comprises 244 residues: NAD-dependent protein deacylase SIR2rp3 (244 aa).

A Deacetylase sirtuin-type domain is found at 1-239 (MRRPNGMIAI…PAWADEVLHG (239 aa)). Residue 13–32 (GAGISAESGISTFRDQNGLW) coordinates NAD(+). The substrate site is built by tyrosine 57 and arginine 60. 95-98 (QNID) is a binding site for NAD(+). Histidine 113 functions as the Proton acceptor in the catalytic mechanism. Zn(2+) contacts are provided by cysteine 121 and cysteine 141. Residues 181 to 183 (GTS) and alanine 225 each bind NAD(+).

It belongs to the sirtuin family. Class III subfamily. Zn(2+) serves as cofactor.

The protein localises to the mitochondrion. It catalyses the reaction N(6)-malonyl-L-lysyl-[protein] + NAD(+) + H2O = 2''-O-malonyl-ADP-D-ribose + nicotinamide + L-lysyl-[protein]. The catalysed reaction is N(6)-succinyl-L-lysyl-[protein] + NAD(+) + H2O = 2''-O-succinyl-ADP-D-ribose + nicotinamide + L-lysyl-[protein]. It carries out the reaction N(6)-glutaryl-L-lysyl-[protein] + NAD(+) + H2O = 2''-O-glutaryl-ADP-D-ribose + nicotinamide + L-lysyl-[protein]. In terms of biological role, NAD-dependent lysine demalonylase, desuccinylase and deglutarylase that specifically removes malonyl, succinyl and glutaryl groups on target proteins. Has weak NAD-dependent protein deacetylase activity; however this activity may not be physiologically relevant in vivo. This is NAD-dependent protein deacylase SIR2rp3 (SIR2rp3) from Trypanosoma brucei brucei (strain 927/4 GUTat10.1).